We begin with the raw amino-acid sequence, 311 residues long: tRNA-cytidine(32) 2-sulfurtransferase (311 aa).

The PP-loop motif motif lies at 47 to 52; it reads SGGKDS. Cys122, Cys125, and Cys213 together coordinate [4Fe-4S] cluster.

The protein belongs to the TtcA family. In terms of assembly, homodimer. Mg(2+) is required as a cofactor. It depends on [4Fe-4S] cluster as a cofactor.

The protein resides in the cytoplasm. It catalyses the reaction cytidine(32) in tRNA + S-sulfanyl-L-cysteinyl-[cysteine desulfurase] + AH2 + ATP = 2-thiocytidine(32) in tRNA + L-cysteinyl-[cysteine desulfurase] + A + AMP + diphosphate + H(+). Its pathway is tRNA modification. Catalyzes the ATP-dependent 2-thiolation of cytidine in position 32 of tRNA, to form 2-thiocytidine (s(2)C32). The sulfur atoms are provided by the cysteine/cysteine desulfurase (IscS) system. This is tRNA-cytidine(32) 2-sulfurtransferase from Shigella boydii serotype 4 (strain Sb227).